A 903-amino-acid polypeptide reads, in one-letter code: Alanine--tRNA ligase (903 aa).

Zn(2+)-binding residues include H581, H585, C693, and H697.

Belongs to the class-II aminoacyl-tRNA synthetase family. Zn(2+) serves as cofactor.

It is found in the cytoplasm. The enzyme catalyses tRNA(Ala) + L-alanine + ATP = L-alanyl-tRNA(Ala) + AMP + diphosphate. In terms of biological role, catalyzes the attachment of alanine to tRNA(Ala) in a two-step reaction: alanine is first activated by ATP to form Ala-AMP and then transferred to the acceptor end of tRNA(Ala). Also edits incorrectly charged Ser-tRNA(Ala) and Gly-tRNA(Ala) via its editing domain. This chain is Alanine--tRNA ligase, found in Psychrobacter sp. (strain PRwf-1).